A 999-amino-acid chain; its full sequence is Translation initiation factor IF-2 (999 aa).

The disordered stretch occupies residues 50-407; the sequence is AFVNNTGSPA…RGQGQTVRLS (358 aa). Pro residues-rich tracts occupy residues 60 to 89 and 96 to 121; these read PAAP…PPGG and PMPP…PPQS. A compositionally biased stretch (low complexity) spans 136-162; sequence VAAAEARAAALKAEQEAAVKAAQAARQ. Positions 163 to 173 are enriched in basic and acidic residues; that stretch reads QQRDNVRREPP. The segment covering 179–194 has biased composition (pro residues); it reads RPGPRPGPGAMPPRPG. Residues 213 to 222 show a composition bias toward low complexity; it reads GGRPPARGAG. Pro residues predominate over residues 244-266; sequence RPSPASMPPRPSPASMPPRPSPA. Residues 275 to 367 are compositionally biased toward gly residues; sequence RPGGPGSGRP…GAAGAFGRPG (93 aa). Residues 371-380 are compositionally biased toward basic residues; that stretch reads TRGRKSKKQR. The span at 388–405 shows a compositional bias: polar residues; the sequence is SAPTMSSGAPRGQGQTVR. The tr-type G domain maps to 490-662; it reads SRPPVVTVMG…VLLTADASLE (173 aa). The G1 stretch occupies residues 499 to 506; it reads GHVDHGKT. Residue 499–506 coordinates GTP; sequence GHVDHGKT. Residues 524–528 form a G2 region; sequence GITQH. Residues 549–552 form a G3 region; the sequence is DTPG. GTP contacts are provided by residues 549 to 553 and 603 to 606; these read DTPGH and NKID. The G4 stretch occupies residues 603–606; the sequence is NKID. Positions 639 to 641 are G5; sequence AAK.

Belongs to the TRAFAC class translation factor GTPase superfamily. Classic translation factor GTPase family. IF-2 subfamily.

It localises to the cytoplasm. One of the essential components for the initiation of protein synthesis. Protects formylmethionyl-tRNA from spontaneous hydrolysis and promotes its binding to the 30S ribosomal subunits. Also involved in the hydrolysis of GTP during the formation of the 70S ribosomal complex. This Salinispora tropica (strain ATCC BAA-916 / DSM 44818 / JCM 13857 / NBRC 105044 / CNB-440) protein is Translation initiation factor IF-2.